The primary structure comprises 507 residues: Maturase K (507 aa).

This sequence belongs to the intron maturase 2 family. MatK subfamily.

It localises to the plastid. The protein localises to the chloroplast. Usually encoded in the trnK tRNA gene intron. Probably assists in splicing its own and other chloroplast group II introns. The polypeptide is Maturase K (Ranunculus acris (Meadow buttercup)).